Reading from the N-terminus, the 97-residue chain is uncharacterized protein (97 aa).

A run of 3 helical transmembrane segments spans residues 5 to 25 (INYL…FVGI), 49 to 71 (IAGY…SFQG), and 75 to 92 (LIPP…IYVN).

It localises to the cell membrane. This is an uncharacterized protein from Bacillus subtilis (strain 168).